We begin with the raw amino-acid sequence, 528 residues long: Lysine--tRNA ligase (528 aa).

The 'HIGH' region motif lies at 44-52; sequence PSGLPHIGT. Positions 290–294 match the 'KMSKS' region motif; that stretch reads KISKS. ATP is bound at residue Lys293.

It belongs to the class-I aminoacyl-tRNA synthetase family.

It localises to the cytoplasm. The enzyme catalyses tRNA(Lys) + L-lysine + ATP = L-lysyl-tRNA(Lys) + AMP + diphosphate. The chain is Lysine--tRNA ligase (lysS) from Rickettsia prowazekii (strain Madrid E).